Consider the following 212-residue polypeptide: ATP-dependent dethiobiotin synthetase BioD (212 aa).

13-18 (GIGKTV) contributes to the ATP binding site. T17 is a Mg(2+) binding site. Residue K33 is part of the active site. S37 is a binding site for substrate. E100 is a Mg(2+) binding site. ATP-binding positions include 100 to 103 (EGAG) and 184 to 186 (PLL).

It belongs to the dethiobiotin synthetase family. Homodimer. Mg(2+) is required as a cofactor.

The protein localises to the cytoplasm. The enzyme catalyses (7R,8S)-7,8-diammoniononanoate + CO2 + ATP = (4R,5S)-dethiobiotin + ADP + phosphate + 3 H(+). It functions in the pathway cofactor biosynthesis; biotin biosynthesis; biotin from 7,8-diaminononanoate: step 1/2. Catalyzes a mechanistically unusual reaction, the ATP-dependent insertion of CO2 between the N7 and N8 nitrogen atoms of 7,8-diaminopelargonic acid (DAPA, also called 7,8-diammoniononanoate) to form a ureido ring. This is ATP-dependent dethiobiotin synthetase BioD from Brucella canis (strain ATCC 23365 / NCTC 10854 / RM-666).